The sequence spans 292 residues: ATP synthase gamma chain (292 aa).

The protein belongs to the ATPase gamma chain family. In terms of assembly, F-type ATPases have 2 components, CF(1) - the catalytic core - and CF(0) - the membrane proton channel. CF(1) has five subunits: alpha(3), beta(3), gamma(1), delta(1), epsilon(1). CF(0) has three main subunits: a, b and c.

Its subcellular location is the cell membrane. In terms of biological role, produces ATP from ADP in the presence of a proton gradient across the membrane. The gamma chain is believed to be important in regulating ATPase activity and the flow of protons through the CF(0) complex. In Streptococcus pneumoniae serotype 2 (strain D39 / NCTC 7466), this protein is ATP synthase gamma chain.